Consider the following 769-residue polypeptide: Cullin-3 (769 aa).

Residues Asp-614–Ser-655 form a disordered region. Positions Pro-618–Ser-653 are enriched in low complexity. A Cullin neddylation domain is found at Asp-699–Asp-761. Residue Lys-713 forms a Glycyl lysine isopeptide (Lys-Gly) (interchain with G-Cter in NEDD8) linkage.

The protein belongs to the cullin family. Post-translationally, neddylated. Deneddylated via its interaction with the COP9 signalosome (CSN) complex.

The protein resides in the nucleus. The protein operates within protein modification; protein ubiquitination. Probable core component of cullin-based SCF-like E3 ubiquitin-protein ligase complexes which mediate the ubiquitination and subsequent proteasomal degradation of target proteins. The E3 ubiquitin-protein ligase activity of the complex is dependent on the neddylation of the cullin subunit. In Dictyostelium discoideum (Social amoeba), this protein is Cullin-3 (culC).